A 363-amino-acid polypeptide reads, in one-letter code: Putative F-box protein At4g22170 (363 aa).

The F-box domain maps to 7-58 (PNSWSDLPHDLLNLVFERLSFANFNRARSVCSSWYSASRQSVPKNQIHWLIL).

This Arabidopsis thaliana (Mouse-ear cress) protein is Putative F-box protein At4g22170.